We begin with the raw amino-acid sequence, 234 residues long: NLP effector protein Pc576423 (234 aa).

The N-terminal stretch at 1–18 (MNLRAIAVTFATFAGANA) is a signal peptide. Residues N35 and N66 are each glycosylated (N-linked (GlcNAc...) asparagine). Positions 119-125 (GHRHDWE) match the Hepta-peptide GHRHDWE motif motif.

This sequence belongs to the Necrosis inducing protein (NPP1) family.

It localises to the secreted. Its function is as follows. Secreted effector that contributes strongly to virulence during infection by P.capsici. This is NLP effector protein Pc576423 from Phytophthora capsici.